Reading from the N-terminus, the 464-residue chain is ATP synthase subunit beta 2 (464 aa).

Residue Gly-153–Thr-160 participates in ATP binding.

The protein belongs to the ATPase alpha/beta chains family. In terms of assembly, F-type ATPases have 2 components, CF(1) - the catalytic core - and CF(0) - the membrane proton channel. CF(1) has five subunits: alpha(3), beta(3), gamma(1), delta(1), epsilon(1). CF(0) has three main subunits: a(1), b(2) and c(9-12). The alpha and beta chains form an alternating ring which encloses part of the gamma chain. CF(1) is attached to CF(0) by a central stalk formed by the gamma and epsilon chains, while a peripheral stalk is formed by the delta and b chains.

It is found in the cell inner membrane. The enzyme catalyses ATP + H2O + 4 H(+)(in) = ADP + phosphate + 5 H(+)(out). Functionally, produces ATP from ADP in the presence of a proton gradient across the membrane. The catalytic sites are hosted primarily by the beta subunits. The sequence is that of ATP synthase subunit beta 2 from Paraburkholderia xenovorans (strain LB400).